We begin with the raw amino-acid sequence, 356 residues long: Leucine-rich repeat and transmembrane domain-containing protein 1 (356 aa).

Residues methionine 1 to serine 32 form the signal peptide. Residues cysteine 33–proline 62 enclose the LRRNT domain. The Extracellular portion of the chain corresponds to cysteine 33–threonine 299. LRR repeat units lie at residues tryptophan 63–serine 84, leucine 87–glycine 108, histidine 111–alanine 132, glycine 135–proline 156, and asparagine 159–alanine 180. N-linked (GlcNAc...) asparagine glycans are attached at residues asparagine 92 and asparagine 116. A glycan (N-linked (GlcNAc...) asparagine) is linked at asparagine 159. One can recognise an LRRCT domain in the interval asparagine 192–leucine 246. Polar residues predominate over residues leucine 255–glutamine 277. A disordered region spans residues leucine 255 to proline 288. A helical membrane pass occupies residues valine 300–tyrosine 320. Residues glycine 321 to alanine 356 lie on the Cytoplasmic side of the membrane.

The protein localises to the membrane. The chain is Leucine-rich repeat and transmembrane domain-containing protein 1 (Lrtm1) from Mus musculus (Mouse).